Consider the following 637-residue polypeptide: MTQSVHAETHGFQTEVKQLLSLMAHSLYSNKEVFLRELISNASDAADKLRFKALSDASLFENDGQLRVRLVVDKENRTLTISDNGIGMTRDQVIEHLGTIAKSGTAEFFKNLSGDQGRDSQLIGQFGVGFYSAFIVADKVTVVSRAAGTAPEQGVQWESEGEGSFTVADVTKEGRGTDVILHLRAEEEEFLDDWRLRAVVAKYSDHISVPVEMFKEGTPDREEDGETVVGTPGEWEQVNRATALWTRNPKEIKDEEYQEFYKHVAHDFEDPLLWGHNRVEGAQEYTSLLYVPARAPFDLYNREQKHGLKLYVQRVFIMDDAEQFMPTYLRFVKGVLDSNDLPLNVSREILQDNKVTVSLRKACSKRVLTMLAKLAKDDAEKYAKFWSEFGNVLKEGPAEDYANREEIAKLLRFASTAGEGEAQTVSLEDYVGRMKEGQQKIYYITADSFAAAKNSPHLEIFRKKGVEVLLMWERVDEWLMSHLTEFDGKQLVSVTRGELDLGDLEDEASKQAQEEAEKANAGLVERVKTSLGEAVKEVRVTHRLTDSPSCIVTDNHGMSTQMIKLMRAAGQPVPEQKYILELNPDHALVKKLDTIEDEALFGEWVTLLHEQAQLAEQGGLNDPASFVSRINRLLLQA.

Residues 1–347 (MTQSVHAETH…SNDLPLNVSR (347 aa)) form an a; substrate-binding region. The tract at residues 348-564 (EILQDNKVTV…NHGMSTQMIK (217 aa)) is b. Positions 565-637 (LMRAAGQPVP…SRINRLLLQA (73 aa)) are c.

It belongs to the heat shock protein 90 family. Homodimer.

The protein localises to the cytoplasm. Molecular chaperone. Has ATPase activity. The polypeptide is Chaperone protein HtpG (Aeromonas salmonicida (strain A449)).